Here is a 582-residue protein sequence, read N- to C-terminus: Fructose-1,6-bisphosphatase class 3 (582 aa).

This sequence belongs to the FBPase class 3 family. The cofactor is Mn(2+).

The catalysed reaction is beta-D-fructose 1,6-bisphosphate + H2O = beta-D-fructose 6-phosphate + phosphate. It functions in the pathway carbohydrate biosynthesis; gluconeogenesis. The polypeptide is Fructose-1,6-bisphosphatase class 3 (Saccharophagus degradans (strain 2-40 / ATCC 43961 / DSM 17024)).